A 226-amino-acid chain; its full sequence is Ribonuclease 3 (226 aa).

The RNase III domain occupies 6-128 (INRLQRKLGY…LIGGVFLDSN (123 aa)). Glu-41 provides a ligand contact to Mg(2+). Asp-45 is a catalytic residue. 2 residues coordinate Mg(2+): Asp-114 and Glu-117. Glu-117 is an active-site residue. The DRBM domain maps to 155–225 (DPKTRLQEYL…AEQVLKKLEL (71 aa)).

It belongs to the ribonuclease III family. As to quaternary structure, homodimer. Mg(2+) is required as a cofactor.

It is found in the cytoplasm. The enzyme catalyses Endonucleolytic cleavage to 5'-phosphomonoester.. Digests double-stranded RNA. Involved in the processing of primary rRNA transcript to yield the immediate precursors to the large and small rRNAs (23S and 16S). Processes some mRNAs, and tRNAs when they are encoded in the rRNA operon. Processes pre-crRNA and tracrRNA of type II CRISPR loci if present in the organism. This is Ribonuclease 3 from Salmonella choleraesuis (strain SC-B67).